A 42-amino-acid polypeptide reads, in one-letter code: Cytochrome b559 subunit beta (42 aa).

The helical transmembrane segment at 17-33 threads the bilayer; that stretch reads WLAIHGLAVPTVFFLGA. His21 is a binding site for heme.

This sequence belongs to the PsbE/PsbF family. As to quaternary structure, heterodimer of an alpha subunit and a beta subunit. PSII is composed of 1 copy each of membrane proteins PsbA, PsbB, PsbC, PsbD, PsbE, PsbF, PsbH, PsbI, PsbJ, PsbK, PsbL, PsbM, PsbT, PsbX, PsbY, PsbZ, Psb30/Ycf12, at least 3 peripheral proteins of the oxygen-evolving complex and a large number of cofactors. It forms dimeric complexes. Heme b serves as cofactor.

The protein localises to the plastid. It is found in the chloroplast thylakoid membrane. In terms of biological role, this b-type cytochrome is tightly associated with the reaction center of photosystem II (PSII). PSII is a light-driven water:plastoquinone oxidoreductase that uses light energy to abstract electrons from H(2)O, generating O(2) and a proton gradient subsequently used for ATP formation. It consists of a core antenna complex that captures photons, and an electron transfer chain that converts photonic excitation into a charge separation. The polypeptide is Cytochrome b559 subunit beta (Guillardia theta (Cryptophyte)).